Here is a 626-residue protein sequence, read N- to C-terminus: Putative Xaa-Pro dipeptidyl-peptidase (626 aa).

Active-site charge relay system residues include Ser231, Asp348, and His379.

This sequence belongs to the peptidase S15 family.

It catalyses the reaction Hydrolyzes Xaa-Pro-|- bonds to release unblocked, N-terminal dipeptides from substrates including Ala-Pro-|-p-nitroanilide and (sequentially) Tyr-Pro-|-Phe-Pro-|-Gly-Pro-|-Ile.. This Rhodopirellula baltica (strain DSM 10527 / NCIMB 13988 / SH1) protein is Putative Xaa-Pro dipeptidyl-peptidase.